The following is a 209-amino-acid chain: FMN-dependent NADH:quinone oxidoreductase 2 (209 aa).

Residues Ser9, 15–17 (SVS), and 97–100 (MWNF) contribute to the FMN site.

It belongs to the azoreductase type 1 family. Homodimer. The cofactor is FMN.

It carries out the reaction 2 a quinone + NADH + H(+) = 2 a 1,4-benzosemiquinone + NAD(+). The catalysed reaction is N,N-dimethyl-1,4-phenylenediamine + anthranilate + 2 NAD(+) = 2-(4-dimethylaminophenyl)diazenylbenzoate + 2 NADH + 2 H(+). Its function is as follows. Quinone reductase that provides resistance to thiol-specific stress caused by electrophilic quinones. Functionally, also exhibits azoreductase activity. Catalyzes the reductive cleavage of the azo bond in aromatic azo compounds to the corresponding amines. This Pseudomonas syringae pv. tomato (strain ATCC BAA-871 / DC3000) protein is FMN-dependent NADH:quinone oxidoreductase 2.